We begin with the raw amino-acid sequence, 216 residues long: Flavin prenyltransferase UbiX (216 aa).

FMN-binding positions include 9–11, Ser35, and Arg144; that span reads GAS. Residues Tyr174 and Arg190 each contribute to the dimethylallyl phosphate site.

Belongs to the UbiX/PAD1 family.

The enzyme catalyses dimethylallyl phosphate + FMNH2 = prenylated FMNH2 + phosphate. Flavin prenyltransferase that catalyzes the synthesis of the prenylated FMN cofactor (prenyl-FMN) for 4-hydroxy-3-polyprenylbenzoic acid decarboxylase UbiD. The prenyltransferase is metal-independent and links a dimethylallyl moiety from dimethylallyl monophosphate (DMAP) to the flavin N5 and C6 atoms of FMN. The chain is Flavin prenyltransferase UbiX from Streptomyces coelicolor (strain ATCC BAA-471 / A3(2) / M145).